The sequence spans 321 residues: Type 3 secretion system translocon protein SctB (321 aa).

Residues 99–119 (AALIGGAISSVLGILGSFAAI) traverse the membrane as a helical segment.

This sequence belongs to the SctB/EspB family. As to quaternary structure, the core secretion machinery of the T3SS is composed of approximately 20 different proteins, including cytoplasmic components, a base, an export apparatus and a needle. This subunit is involved in the formation of a pore, called the translocon, in host membrane.

It localises to the secreted. It is found in the cell surface. The protein localises to the host membrane. In terms of biological role, component of the type III secretion system (T3SS), also called injectisome, which is used to inject bacterial effector proteins into eukaryotic host cells. EspD and EspB are inserted into the host membrane where they form a pore and allow the translocation of effector proteins into the cytosol of target cells. Necessary for intimate attachment to epithelial cells. This chain is Type 3 secretion system translocon protein SctB, found in Escherichia coli O127:H6 (strain E2348/69 / EPEC).